Here is a 212-residue protein sequence, read N- to C-terminus: Probable nicotinate-nucleotide adenylyltransferase (212 aa).

Belongs to the NadD family.

The enzyme catalyses nicotinate beta-D-ribonucleotide + ATP + H(+) = deamido-NAD(+) + diphosphate. It participates in cofactor biosynthesis; NAD(+) biosynthesis; deamido-NAD(+) from nicotinate D-ribonucleotide: step 1/1. Functionally, catalyzes the reversible adenylation of nicotinate mononucleotide (NaMN) to nicotinic acid adenine dinucleotide (NaAD). The chain is Probable nicotinate-nucleotide adenylyltransferase from Methylibium petroleiphilum (strain ATCC BAA-1232 / LMG 22953 / PM1).